A 469-amino-acid polypeptide reads, in one-letter code: MLPPWTLGLLLLATVRGKEVCYGQLGCFSDEKPWAGTLQRPVKLLPWSPEDIDTRFLLYTNENPNNFQLITGTEPDTIEASNFQLDRKTRFIIHGFLDKAEDSWPSDMCKKMFEVEKVNCICVDWRHGSRAMYTQAVQNIRVVGAETAFLIQALSTQLGYSLEDVHVIGHSLGAHTAAEAGRRLGGRVGRITGLDPAGPCFQDEPEEVRLDPSDAVFVDVIHTDSSPIVPSLGFGMSQKVGHLDFFPNGGKEMPGCKKNVLSTITDIDGIWEGIGGFVSCNHLRSFEYYSSSVLNPDGFLGYPCASYDEFQESKCFPCPAEGCPKMGHYADQFKGKTSAVEQTFFLNTGESGNFTSWRYKISVTLSGKEKVNGYIRIALYGSNENSKQYEIFKGSLKPDASHTCAIDVDFNVGKIQKVKFLWNKRGINLSEPKLGASQITVQSGEDGTEYNFCSSDTVEENVLQSLYPC.

Positions 1–17 (MLPPWTLGLLLLATVRG) are cleaved as a signal peptide. The cysteines at positions 21 and 27 are disulfide-linked. The tract at residues 93 to 105 (IHGFLDKAEDSWP) is required for galactolipase activity. Cys-109 and Cys-120 are oxidised to a cystine. The active-site Nucleophile is Ser-171. Asp-195 (charge relay system) is an active-site residue. 4 residues coordinate Ca(2+): Glu-206, Arg-209, Asp-211, and Asp-214. Cys-256 and Cys-280 are joined by a disulfide. Residues 257 to 279 (KKNVLSTITDIDGIWEGIGGFVS) are required for galactolipase activity. The active-site Charge relay system is the His-282. 2 disulfides stabilise this stretch: Cys-304–Cys-315 and Cys-318–Cys-323. Residues Asn-353 and Asn-428 are each glycosylated (N-linked (GlcNAc...) asparagine). The PLAT domain maps to 357 to 469 (WRYKISVTLS…ENVLQSLYPC (113 aa)). A disulfide bridge connects residues Cys-453 and Cys-469.

Belongs to the AB hydrolase superfamily. Lipase family. Pancreas.

Its subcellular location is the secreted. It is found in the zymogen granule membrane. The protein localises to the cell projection. It localises to the neuron projection. The catalysed reaction is a triacylglycerol + H2O = a diacylglycerol + a fatty acid + H(+). It catalyses the reaction a 1,2-diacyl-3-O-(beta-D-galactosyl)-sn-glycerol + 2 H2O = 3-beta-D-galactosyl-sn-glycerol + 2 a fatty acid + 2 H(+). It carries out the reaction 1,2,3-tri-(9Z-octadecenoyl)-glycerol + H2O = di-(9Z)-octadecenoylglycerol + (9Z)-octadecenoate + H(+). The enzyme catalyses di-(9Z)-octadecenoylglycerol + H2O = (9Z-octadecenoyl)-glycerol + (9Z)-octadecenoate + H(+). The catalysed reaction is (9Z-octadecenoyl)-glycerol + H2O = glycerol + (9Z)-octadecenoate + H(+). It catalyses the reaction 1-(9Z-octadecenoyl)-glycerol + H2O = glycerol + (9Z)-octadecenoate + H(+). It carries out the reaction 1,2,3-tripropanoylglycerol + H2O = dipropanoylglycerol + propanoate + H(+). The enzyme catalyses 1,2,3-tributanoylglycerol + H2O = dibutanoylglycerol + butanoate + H(+). The catalysed reaction is 1,2,3-trioctanoylglycerol + H2O = dioctanoylglycerol + octanoate + H(+). It catalyses the reaction 1,2-didecanoylglycerol + H2O = decanoylglycerol + decanoate + H(+). It carries out the reaction long chain 1,2-diacyl-3-O-beta-D-galactosyl-sn-glycerol + H2O = long chain acyl-3-O-beta-D-galactosyl-sn-glycerol + a fatty acid + H(+). The enzyme catalyses 1,2-dioctanoyl-3-O-beta-D-galactosyl-sn-glycerol + H2O = octanoyl-3-(beta-D-galactosyl)-sn-glycerol + octanoate + H(+). The catalysed reaction is 1,2-didodecanoyl-3-beta-D-galactosyl-sn-glycerol + H2O = dodecanoyl-3-beta-D-galactosyl-sn-glycerol + dodecanoate + H(+). It catalyses the reaction 1-beta-D-galactosyl-2,3-didodecanoyl-sn-glycerol + H2O = 1-beta-D-galactosyl-dodecanoyl-sn-glycerol + dodecanoate + H(+). It carries out the reaction a 1,2-diacyl-3-O-[alpha-D-galactosyl-(1-&gt;6)-beta-D-galactosyl]-sn-glycerol + H2O = acyl-3-O-[alpha-D-galactosyl-(1-&gt;6)-beta-D-galactosyl]-sn-glycerol + a fatty acid + H(+). The enzyme catalyses long chain 1,2-diacyl-3-O-[alpha-D-galactosyl-(1-&gt;6)-beta-D-galactosyl]-sn-glycerol + H2O = long chain acyl-3-O-[alpha-D-galactosyl-(1-&gt;6)-beta-D-galactosyl]-sn-glycerol + a fatty acid + H(+). The catalysed reaction is 1,2-dioctanoyl-3-O-[alpha-D-galactosyl-(1-&gt;6)-beta-D-galactosyl]-sn-glycerol + H2O = octanoyl-3-O-[alpha-D-galactosyl-(1-&gt;6)-beta-D-galactosyl]-sn-glycerol + octanoate + H(+). It catalyses the reaction 1,2-didodecanoyl-3-O-[alpha-D-galactosyl-(1-&gt;6)-beta-D-galactosyl]-sn-glycerol + H2O = dodecanoyl-3-O-[alpha-D-galactosyl-(1-&gt;6)-beta-D-galactosyl]-sn-glycerol + dodecanoate + H(+). It carries out the reaction a 1,2-diacyl-sn-glycero-3-phosphocholine + H2O = a monoacyl-sn-glycero-3-phosphocholine + a fatty acid + H(+). It participates in glycerolipid metabolism; triacylglycerol degradation. It functions in the pathway glycolipid metabolism. With respect to regulation, regulated by CLPS and bile salts levels ranging 1-5 mM in neonates and 2-30 mM in healthy adults. CLPS stimulates milk fat digestion in the presence of 4 mM bile salts. Triacylglycerol lipase activity toward short- and medium-chain triglycerides is inhibited by increasing concentrations of bile salts and weakly reactivated by CLPS. Optimal triacylglycerol lipase activity is reached at bile salts concentrations ranging from 0.1 to 0.5 mM and then decreases at concentrations higher than 1 mM. Lipase activity toward long-chain glycerolipids is stimulated by CLPS in the presence of 4 mM bile salts. Galactolipase activity is inhibited at high concentrations of bile salts. Triacylglycerol lipase activity is inhibited by anti-obesity drug tetrahydrolipstatin. In terms of biological role, lipase that primarily hydrolyzes triglycerides and galactosylglycerides. In neonates, may play a major role in pancreatic digestion of dietary fats such as milk fat globules enriched in long-chain triglycerides. Hydrolyzes short-, medium- and long-chain fatty acyls in triglycerides without apparent positional specificity. Can completely deacylate triacylglycerols. When the liver matures and bile salt synthesis increases, likely functions mainly as a galactolipase and monoacylglycerol lipase. Hydrolyzes monogalactosyldiglycerols (MGDG) and digalactosyldiacylglycerols (DGDG) present in a plant-based diet, releasing long-chain polyunsaturated fatty acids. Hydrolyzes medium- and long-chain fatty acyls in galactolipids. May act together with LIPF to hydrolyze partially digested triglycerides. Hydrolyzes long-chain monoglycerides with high efficiency. In cytotoxic T cells, contributes to perforin-dependent cell lysis, but is unlikely to mediate direct cytotoxicity. Also has low phospholipase activity. In neurons, required for the localization of the phospholipid 1-oleoyl-2-palmitoyl-PC (OPPC) to neurite tips through acyl chain remodeling of membrane phospholipids. The resulting OPPC-rich lipid membrane domain recruits the t-SNARE protein STX4 by selectively interacting with the STX4 transmembrane domain and this promotes surface expression of the dopamine transporter SLC6A3/DAT at neurite tips by facilitating fusion of SLC6A3-containing transport vesicles with the plasma membrane. The protein is Pancreatic lipase-related protein 2 of Homo sapiens (Human).